A 276-amino-acid polypeptide reads, in one-letter code: Putative translation initiation factor eIF-2B subunit 2-like (276 aa).

Belongs to the eIF-2B alpha/beta/delta subunits family. In terms of assembly, complex of two different subunits.

Functionally, catalyzes the exchange of initiation factor 2-bound GDP for GTP. In Pyrococcus abyssi (strain GE5 / Orsay), this protein is Putative translation initiation factor eIF-2B subunit 2-like.